The following is a 156-amino-acid chain: Small ribosomal subunit protein uS7 (156 aa).

This sequence belongs to the universal ribosomal protein uS7 family. Part of the 30S ribosomal subunit. Contacts proteins S9 and S11.

Its function is as follows. One of the primary rRNA binding proteins, it binds directly to 16S rRNA where it nucleates assembly of the head domain of the 30S subunit. Is located at the subunit interface close to the decoding center, probably blocks exit of the E-site tRNA. The sequence is that of Small ribosomal subunit protein uS7 from Beijerinckia indica subsp. indica (strain ATCC 9039 / DSM 1715 / NCIMB 8712).